The primary structure comprises 735 residues: Non-structural protein 1 (735 aa).

Disordered stretches follow at residues 18-50 (YAST…SHTM), 138-170 (PEPE…NTPQ), and 218-290 (TSIP…SPMY). Residues 38–47 (APASLTSTDS) are compositionally biased toward low complexity. Positions 218 to 234 (TSIPACSPAPSSLPSIL) are enriched in low complexity. The segment covering 235–247 (TMQTRPPSPSSKS) has biased composition (polar residues). The span at 254–274 (LPERRPTRRPEHIANDEDYNR) shows a compositional bias: basic and acidic residues.

The protein belongs to the aquareoviridae NS1 protein family.

Its function is as follows. Non-structural protein with ssRNA-binding activity. Is probably involved in the formation of viral inclusions, where the assembly of cores and the replication of viral RNA are thought to occur. This chain is Non-structural protein 1 (S4), found in Ctenopharyngodon idella (Grass carp).